We begin with the raw amino-acid sequence, 520 residues long: 3-phosphoshikimate 1-carboxyvinyltransferase, chloroplastic (520 aa).

The transit peptide at 1 to 76 (MAQISSMAQG…RISASVATAE (76 aa)) directs the protein to the chloroplast. Lys-99, Ser-100, and Arg-104 together coordinate 3-phosphoshikimate. Lys-99 provides a ligand contact to phosphoenolpyruvate. 2 residues coordinate phosphoenolpyruvate: Gly-177 and Arg-207. 3-phosphoshikimate-binding residues include Ser-254, Ser-255, Gln-256, Ser-282, Asp-407, and Lys-434. Phosphoenolpyruvate is bound at residue Gln-256. Residue Asp-407 is the Proton acceptor of the active site. Phosphoenolpyruvate is bound by residues Arg-438, Arg-480, and Lys-505.

This sequence belongs to the EPSP synthase family.

It localises to the plastid. The protein localises to the chloroplast. The catalysed reaction is 3-phosphoshikimate + phosphoenolpyruvate = 5-O-(1-carboxyvinyl)-3-phosphoshikimate + phosphate. It functions in the pathway metabolic intermediate biosynthesis; chorismate biosynthesis; chorismate from D-erythrose 4-phosphate and phosphoenolpyruvate: step 6/7. In terms of biological role, catalyzes the transfer of the enolpyruvyl moiety of phosphoenolpyruvate (PEP) to the 5-hydroxyl of shikimate-3-phosphate (S3P) to produce enolpyruvyl shikimate-3-phosphate and inorganic phosphate. The protein is 3-phosphoshikimate 1-carboxyvinyltransferase, chloroplastic of Solanum lycopersicum (Tomato).